We begin with the raw amino-acid sequence, 215 residues long: Deoxyribose-phosphate aldolase (215 aa).

Residue D89 is the Proton donor/acceptor of the active site. K153 (schiff-base intermediate with acetaldehyde) is an active-site residue. K182 (proton donor/acceptor) is an active-site residue.

Belongs to the DeoC/FbaB aldolase family. DeoC type 1 subfamily.

It is found in the cytoplasm. It catalyses the reaction 2-deoxy-D-ribose 5-phosphate = D-glyceraldehyde 3-phosphate + acetaldehyde. It participates in carbohydrate degradation; 2-deoxy-D-ribose 1-phosphate degradation; D-glyceraldehyde 3-phosphate and acetaldehyde from 2-deoxy-alpha-D-ribose 1-phosphate: step 2/2. Catalyzes a reversible aldol reaction between acetaldehyde and D-glyceraldehyde 3-phosphate to generate 2-deoxy-D-ribose 5-phosphate. This Lactiplantibacillus plantarum (strain ATCC BAA-793 / NCIMB 8826 / WCFS1) (Lactobacillus plantarum) protein is Deoxyribose-phosphate aldolase.